The following is a 142-amino-acid chain: Deoxyuridine 5'-triphosphate nucleotidohydrolase (142 aa).

Residues 62-64 (RSG), Asn-75, and 79-81 (TID) contribute to the substrate site.

It belongs to the dUTPase family. Mg(2+) is required as a cofactor.

The enzyme catalyses dUTP + H2O = dUMP + diphosphate + H(+). It functions in the pathway pyrimidine metabolism; dUMP biosynthesis; dUMP from dCTP (dUTP route): step 2/2. Its function is as follows. This enzyme is involved in nucleotide metabolism: it produces dUMP, the immediate precursor of thymidine nucleotides and it decreases the intracellular concentration of dUTP so that uracil cannot be incorporated into DNA. The chain is Deoxyuridine 5'-triphosphate nucleotidohydrolase from Clostridium novyi (strain NT).